Reading from the N-terminus, the 130-residue chain is Transcription antitermination protein NusB (130 aa).

It belongs to the NusB family.

In terms of biological role, involved in transcription antitermination. Required for transcription of ribosomal RNA (rRNA) genes. Binds specifically to the boxA antiterminator sequence of the ribosomal RNA (rrn) operons. The sequence is that of Transcription antitermination protein NusB from Bacillus cereus (strain ATCC 10987 / NRS 248).